Consider the following 328-residue polypeptide: Peroxidase 71 (328 aa).

Residues 1–23 (MGLVRSLCLLITFLNCLIISVHG) form the signal peptide. Disulfide bonds link Cys44–Cys120, Cys77–Cys82, Cys126–Cys324, and Cys204–Cys235. The Proton acceptor role is filled by His75. Ca(2+) is bound by residues Asp76, Val79, Gly81, Asp83, and Ser85. Pro167 provides a ligand contact to substrate. Residue His197 participates in heme b binding. Thr198 is a Ca(2+) binding site. A glycan (N-linked (GlcNAc...) asparagine) is linked at Asn213. Asp248, Ser251, and Asp256 together coordinate Ca(2+). An N-linked (GlcNAc...) asparagine glycan is attached at Asn262.

It belongs to the peroxidase family. Classical plant (class III) peroxidase subfamily. The cofactor is heme b. Requires Ca(2+) as cofactor. As to expression, slightly expressed in roots.

The protein resides in the secreted. The enzyme catalyses 2 a phenolic donor + H2O2 = 2 a phenolic radical donor + 2 H2O. Its function is as follows. Removal of H(2)O(2), oxidation of toxic reductants, biosynthesis and degradation of lignin, suberization, auxin catabolism, response to environmental stresses such as wounding, pathogen attack and oxidative stress. These functions might be dependent on each isozyme/isoform in each plant tissue. In Arabidopsis thaliana (Mouse-ear cress), this protein is Peroxidase 71 (PER71).